Consider the following 150-residue polypeptide: D-aminoacyl-tRNA deacylase (150 aa).

The short motif at 140–141 (GP) is the Gly-cisPro motif, important for rejection of L-amino acids element.

Belongs to the DTD family. Homodimer.

It is found in the cytoplasm. The enzyme catalyses glycyl-tRNA(Ala) + H2O = tRNA(Ala) + glycine + H(+). It carries out the reaction a D-aminoacyl-tRNA + H2O = a tRNA + a D-alpha-amino acid + H(+). An aminoacyl-tRNA editing enzyme that deacylates mischarged D-aminoacyl-tRNAs. Also deacylates mischarged glycyl-tRNA(Ala), protecting cells against glycine mischarging by AlaRS. Acts via tRNA-based rather than protein-based catalysis; rejects L-amino acids rather than detecting D-amino acids in the active site. By recycling D-aminoacyl-tRNA to D-amino acids and free tRNA molecules, this enzyme counteracts the toxicity associated with the formation of D-aminoacyl-tRNA entities in vivo and helps enforce protein L-homochirality. This is D-aminoacyl-tRNA deacylase (DTD1) from Kluyveromyces lactis (strain ATCC 8585 / CBS 2359 / DSM 70799 / NBRC 1267 / NRRL Y-1140 / WM37) (Yeast).